We begin with the raw amino-acid sequence, 247 residues long: uncharacterized protein (247 aa).

NADP(+) is bound at residue 4-28 (ALVTGGSRGIGRATALLLAQEGYTV). Residue S142 coordinates substrate. Y156 acts as the Proton acceptor in catalysis.

It belongs to the short-chain dehydrogenases/reductases (SDR) family.

This is an uncharacterized protein from Escherichia coli (strain K12).